The following is a 756-amino-acid chain: Nucleomorphin (756 aa).

The span at 1–10 (MDLDYSSDNS) shows a compositional bias: polar residues. The interval 1–113 (MDLDYSSDNS…SQSNEDLSSS (113 aa)) is disordered. Composition is skewed to low complexity over residues 16–66 (NQNN…RPSS) and 75–94 (NNNN…NNNN). Positions 95–113 (GATISHPPTSQSNEDLSSS) are enriched in polar residues. One can recognise a BRCT domain in the interval 124-216 (LNSNIFENLG…ELLGVENYLV (93 aa)). 4 disordered regions span residues 229-251 (NSSQ…INEQ), 272-298 (PSSL…LKSE), 359-403 (KIDL…NKNN), and 422-463 (TSST…LLNL). Low complexity-rich tracts occupy residues 285-298 (LQTQ…LKSE), 364-401 (NNNN…NKNK), and 422-432 (TSSTSSTLSSS). A compositionally biased stretch (basic residues) spans 448–459 (KSKKKFSQKKNH). A Nuclear localization signal motif is present at residues 464–480 (KKSYQDPEIIAHSRPRK). The tract at residues 495 to 512 (ANYISNLDGFKYYARANK) is calmodulin binding. Positions 514 to 529 (SLNSNATTSGGNNRSI) are enriched in polar residues. Residues 514–587 (SLNSNATTSG…SDEDDFDSDE (74 aa)) are disordered. Residues 536–587 (YDDEEEDEEDEDEEDEEEDEEEEEEEEEEEEDYDDEDLNDEESDEDDFDSDE) show a composition bias toward acidic residues. The tract at residues 537 to 588 (DDEEEDEEDEDEEDEEEDEEEEEEEEEEEEDYDDEDLNDEESDEDDFDSDED) is DEED region. 2 calmodulin binding regions span residues 589 to 606 (VSRF…KIYK) and 596 to 613 (KLLQ…RFEH). Disordered stretches follow at residues 613–639 (HSRQ…SHSR) and 660–700 (LSPT…RTNI). The span at 668 to 691 (LSNQFHQDGGNNTTDGNLFNNFST) shows a compositional bias: polar residues.

As to quaternary structure, interacts with calmodulin and CBPD1 in the presence of Ca(2+).

It is found in the nucleus. The sequence is that of Nucleomorphin (numA) from Dictyostelium discoideum (Social amoeba).